The sequence spans 174 residues: Ribosome rescue factor SmrB (174 aa).

Positions 96 to 171 constitute a Smr domain; it reads LDLHGMNQQQ…GDSAILVLLD (76 aa).

It belongs to the SmrB family. In terms of assembly, associates with collided ribosomes, but not with correctly translating polysomes.

Functionally, acts as a ribosome collision sensor. Detects stalled/collided disomes (pairs of ribosomes where the leading ribosome is stalled and a second ribosome has collided with it) and endonucleolytically cleaves mRNA at the 5' boundary of the stalled ribosome. Stalled/collided disomes form a new interface (primarily via the 30S subunits) that binds SmrB. Cleaved mRNA becomes available for tmRNA ligation, leading to ribosomal subunit dissociation and rescue of stalled ribosomes. This Aeromonas hydrophila subsp. hydrophila (strain ATCC 7966 / DSM 30187 / BCRC 13018 / CCUG 14551 / JCM 1027 / KCTC 2358 / NCIMB 9240 / NCTC 8049) protein is Ribosome rescue factor SmrB.